A 333-amino-acid chain; its full sequence is DNA-directed RNA polymerase subunit alpha (333 aa).

Residues 1–234 (MQISVNEFLT…QQLAAFVDLK (234 aa)) form an alpha N-terminal domain (alpha-NTD) region. An alpha C-terminal domain (alpha-CTD) region spans residues 248-333 (IDPILLRPVD…SLKKDDKATA (86 aa)).

It belongs to the RNA polymerase alpha chain family. Homodimer. The RNAP catalytic core consists of 2 alpha, 1 beta, 1 beta' and 1 omega subunit. When a sigma factor is associated with the core the holoenzyme is formed, which can initiate transcription.

The catalysed reaction is RNA(n) + a ribonucleoside 5'-triphosphate = RNA(n+1) + diphosphate. Its function is as follows. DNA-dependent RNA polymerase catalyzes the transcription of DNA into RNA using the four ribonucleoside triphosphates as substrates. This Pseudomonas fluorescens (strain ATCC BAA-477 / NRRL B-23932 / Pf-5) protein is DNA-directed RNA polymerase subunit alpha.